Reading from the N-terminus, the 88-residue chain is RNA-binding protein Hfq (88 aa).

One can recognise a Sm domain in the interval 10-70; it reads DRFLNILRTK…ISTILPAEYI (61 aa).

This sequence belongs to the Hfq family. As to quaternary structure, homohexamer.

Functionally, RNA chaperone that binds small regulatory RNA (sRNAs) and mRNAs to facilitate mRNA translational regulation in response to envelope stress, environmental stress and changes in metabolite concentrations. Also binds with high specificity to tRNAs. This is RNA-binding protein Hfq from Fervidobacterium nodosum (strain ATCC 35602 / DSM 5306 / Rt17-B1).